Reading from the N-terminus, the 438-residue chain is 23S rRNA (uracil(1939)-C(5))-methyltransferase RlmD (438 aa).

Positions lysine 10–lysine 69 constitute a TRAM domain. Positions 82, 88, 91, and 169 each coordinate [4Fe-4S] cluster. Residues glutamine 272, phenylalanine 301, asparagine 306, glutamate 322, asparagine 349, and aspartate 370 each contribute to the S-adenosyl-L-methionine site. The Nucleophile role is filled by cysteine 396.

Belongs to the class I-like SAM-binding methyltransferase superfamily. RNA M5U methyltransferase family. RlmD subfamily.

It carries out the reaction uridine(1939) in 23S rRNA + S-adenosyl-L-methionine = 5-methyluridine(1939) in 23S rRNA + S-adenosyl-L-homocysteine + H(+). In terms of biological role, catalyzes the formation of 5-methyl-uridine at position 1939 (m5U1939) in 23S rRNA. The protein is 23S rRNA (uracil(1939)-C(5))-methyltransferase RlmD of Aliivibrio fischeri (strain MJ11) (Vibrio fischeri).